Reading from the N-terminus, the 440-residue chain is Diels-Alderase mycB (440 aa).

Residues 1 to 18 (MGYLVKLACGLLLPLATA) form the signal peptide. Residues asparagine 80, asparagine 155, and asparagine 332 are each glycosylated (N-linked (GlcNAc...) asparagine).

Belongs to the Diels-Alderase family.

It catalyses the reaction (5S)-5-(2-methylpropyl)-3-[(2E,6R,8E,10E,12E)-6,8,10,12-tetramethyltetradeca-2,8,10,12-tetraenoyl]-2,5-dihydro-1H-pyrrol-2-one = (5S)-3-[(1S,2R,4aR,6R,8aS)-2-(but-2-en-2-yl)-3,4a,6-trimethyl-1,2,4a,5,6,7,8,8a-octahydronaphthalene-1-carbonyl]-5-(2-methylpropyl)-2,5-dihydro-1H-pyrrol-2-one. The enzyme catalyses (5Z)-5-(2-methylpropylidene)-3-[(2E,6R,8E,10E,12E)-6,8,10,12-tetramethyltetradeca-2,8,10,12-tetraenoyl]-2,5-dihydro-1H-pyrrol-2-one = myceliothermophin E. The protein operates within mycotoxin biosynthesis. Diels-Alderase; part of the gene cluster that mediates the biosynthesis of myceliothermophins, mycotoxins that contain a trans-fused decalin ring system connected to a conjugated 3-pyrrolin-2-one moiety and that have potential anti-tumor properties. The polyketide synthase module (PKS) of the PKS-NRPS mycA is responsible for the synthesis of the octaketide backbone. The downstream nonribosomal peptide synthetase (NRPS) module then amidates the carboxyl end of the octaketide with a leucine. A reductase-like domain (R) at the C-terminus catalyzes the reductive release of the polyketide-amino acid intermediate. Because mycA lacks a designated enoylreductase (ER) domain, the required activity is provided the enoyl reductase mycC. Following mycA-catalyzed construction and release of aminoacyl polyketide aldehyde, Knoevenagel condensation yields the expected ketone. This C18 keto acyclic precursor is the substrate of the Diels-Alderase mycB, that catalyzes the Diels-Alder cycloaddition to produce myceliothermophin E. A yet unknown oxygenase involved in the production of myceliothermophin A, via substitution with a hydroxyl group at the C21, has still to be identified. The protein is Diels-Alderase mycB of Thermothelomyces thermophilus (strain ATCC 42464 / BCRC 31852 / DSM 1799) (Sporotrichum thermophile).